The following is a 287-amino-acid chain: Transcription cofactor vestigial-like protein 4 (287 aa).

Disordered regions lie at residues 44–68 and 251–287; these read ASAL…SMEP and AAKD…SVVS. Ser58 and Ser271 each carry phosphoserine. Low complexity predominate over residues 275-287; sequence HMVSHSHSPSVVS.

The protein belongs to the vestigial family. Interacts with TEFs. Interacts with IRF2BP2.

Its subcellular location is the nucleus. Its function is as follows. May act as a specific coactivator for the mammalian TEFs. This chain is Transcription cofactor vestigial-like protein 4 (Vgll4), found in Mus musculus (Mouse).